A 930-amino-acid polypeptide reads, in one-letter code: APC membrane recruitment protein 1 (930 aa).

Disordered regions lie at residues 1-33 (MEIATRCEVGAMRGPSSDSVSHDIPQPQSPPSV), 55-76 (FFGGRGRSQRKGSSKTGVTKSQ), 104-133 (CSEPQKSQEDHGKSQSLPRQRRGLRGLFSS), 161-193 (TVPGALPSVSDRGDYHGDSQGEELVPDVPNQTT), 222-245 (EMDKRRRAEEEGIGEDEKTGRQEG), and 366-454 (EVCY…PRDS). Residues 222 to 242 (EMDKRRRAEEEGIGEDEKTGR) are compositionally biased toward basic and acidic residues. 2 stretches are compositionally biased toward polar residues: residues 377-399 (DSPSLTPDQQLSSIRATSSSSPM) and 413-424 (SPQSDRQESVPN). The segment covering 439–452 (EESRERPHQERLPR) has biased composition (basic and acidic residues).

This sequence belongs to the Amer family.

It localises to the cytoplasm. Its subcellular location is the cell membrane. The protein resides in the nucleus. In terms of biological role, regulator of the canonical Wnt signaling pathway. Acts by specifically binding phosphatidylinositol 4,5-bisphosphate (PtdIns(4,5)P2), translocating to the cell membrane and interacting with key regulators of the canonical Wnt signaling pathway, such as components of the beta-catenin destruction complex. Acts both as a positive and negative regulator of the Wnt signaling pathway, depending on the context. In Danio rerio (Zebrafish), this protein is APC membrane recruitment protein 1 (amer1).